The sequence spans 495 residues: Cysteine--tRNA ligase (495 aa).

A Zn(2+)-binding site is contributed by cysteine 29. Residues proline 31–asparagine 41 carry the 'HIGH' region motif. Zn(2+) is bound by residues cysteine 211, histidine 236, and glutamate 240. The 'KMSKS' region signature appears at lysine 268–serine 272. Lysine 271 lines the ATP pocket.

The protein belongs to the class-I aminoacyl-tRNA synthetase family. In terms of assembly, monomer. Zn(2+) serves as cofactor.

Its subcellular location is the cytoplasm. The enzyme catalyses tRNA(Cys) + L-cysteine + ATP = L-cysteinyl-tRNA(Cys) + AMP + diphosphate. The sequence is that of Cysteine--tRNA ligase from Koribacter versatilis (strain Ellin345).